The sequence spans 575 residues: NEDD4-binding protein 2-like 2 (575 aa).

Basic and acidic residues-rich tracts occupy residues 69–87 (QEDK…EMPG), 129–142 (PPEK…KSET), and 149–167 (DSKR…KLEM). 2 disordered regions span residues 69–169 (QEDK…EMDT) and 555–575 (GEQR…ADDY). Residues 162 to 194 (SKKLEMDTELSQFYKEIEELENENEASQGSCTE) are a coiled coil. Over residues 564 to 575 (GSHSQVSIADDY) the composition is skewed to polar residues.

The polypeptide is NEDD4-binding protein 2-like 2 (N4bp2l2) (Mus musculus (Mouse)).